Here is a 430-residue protein sequence, read N- to C-terminus: MLDPNMLRNELDAVAEKLARRGFKLDVEVLRQQEERRKVLQVETESLQAERNSRSKQIGAAKARGEDIEPLRLEVNALGEKLDAAKAELDKLQNEIRDLALSIPNLPDDSVPVGKNENDNIEVSRWGEPRKYDFDVKDHVSLGEMAGGLDFAAAVKLTGARFVVMKGQIARMHRALSQFMLDLHTEKHGYLEAYVPYLVNHATLYGTGQLPKFGEDLFHTKPLAEESDNSNYALIPTAEVPLTNLVRDEILEEDSLPLKLTAHTPCFRSEAGSYGRDTRGLIRMHQFDKVEMVQITRPEDSMAALEELTGHAEKVLQLLELPYRKVLLCTGDMGFGSSKTYDLEVWLPAQDTYREISSCSNMWDFQARRMQARYRNKTDRKTRLVHTLNGSGLAVGRTLVAVLENYQQADGRIQVPDVLRPYMGGLEYIG.

Thr-237–Glu-239 provides a ligand contact to L-serine. ATP is bound at residue Arg-268–Glu-270. Glu-291 is a binding site for L-serine. Glu-355 to Ser-358 is a binding site for ATP. Ser-391 is an L-serine binding site.

This sequence belongs to the class-II aminoacyl-tRNA synthetase family. Type-1 seryl-tRNA synthetase subfamily. In terms of assembly, homodimer. The tRNA molecule binds across the dimer.

The protein localises to the cytoplasm. It carries out the reaction tRNA(Ser) + L-serine + ATP = L-seryl-tRNA(Ser) + AMP + diphosphate + H(+). It catalyses the reaction tRNA(Sec) + L-serine + ATP = L-seryl-tRNA(Sec) + AMP + diphosphate + H(+). Its pathway is aminoacyl-tRNA biosynthesis; selenocysteinyl-tRNA(Sec) biosynthesis; L-seryl-tRNA(Sec) from L-serine and tRNA(Sec): step 1/1. Functionally, catalyzes the attachment of serine to tRNA(Ser). Is also able to aminoacylate tRNA(Sec) with serine, to form the misacylated tRNA L-seryl-tRNA(Sec), which will be further converted into selenocysteinyl-tRNA(Sec). The protein is Serine--tRNA ligase of Yersinia pseudotuberculosis serotype O:1b (strain IP 31758).